We begin with the raw amino-acid sequence, 360 residues long: Peptide chain release factor 1 (360 aa).

Position 235 is an N5-methylglutamine (Gln-235). The segment covering 285–308 (KRQEAEASERRNLLGSGDRSDRNR) has biased composition (basic and acidic residues). The disordered stretch occupies residues 285–313 (KRQEAEASERRNLLGSGDRSDRNRTYNFP).

This sequence belongs to the prokaryotic/mitochondrial release factor family. In terms of processing, methylated by PrmC. Methylation increases the termination efficiency of RF1.

Its subcellular location is the cytoplasm. In terms of biological role, peptide chain release factor 1 directs the termination of translation in response to the peptide chain termination codons UAG and UAA. In Photorhabdus laumondii subsp. laumondii (strain DSM 15139 / CIP 105565 / TT01) (Photorhabdus luminescens subsp. laumondii), this protein is Peptide chain release factor 1.